We begin with the raw amino-acid sequence, 810 residues long: RING finger protein unkempt homolog (810 aa).

The tract at residues 1-24 (MSKGPGPGGSAASSAPPAATAQVL) is disordered. Low complexity predominate over residues 10–19 (SAASSAPPAA). 5 consecutive C3H1-type zinc fingers follow at residues 84–113 (YSPD…HRTT), 124–154 (YYKT…HGPH), 215–241 (NYKT…HNSK), 251–285 (KYRS…HTRT), and 293–321 (IYKS…HVEQ). Residues 239–265 (NSKDRRRSPRKHKYRSSPCPNVKHGDE) are disordered. Ser-240 bears the Phosphoserine mark. A compositionally biased stretch (basic residues) spans 241-253 (KDRRRSPRKHKYR). A disordered region spans residues 324 to 343 (LSDDLQPSSTVSSPTQPGPV). Low complexity predominate over residues 329–343 (QPSSTVSSPTQPGPV). Phosphoserine is present on residues Ser-374, Ser-378, and Ser-385. Residues 569 to 585 (SASFHSASPSPPVSLSS) are compositionally biased toward low complexity. A disordered region spans residues 569–602 (SASFHSASPSPPVSLSSHFLQQPQGHLSQSENTF). The segment covering 586–602 (HFLQQPQGHLSQSENTF) has biased composition (polar residues). Position 631 is a phosphoserine (Ser-631). Residues 643 to 723 (GAAELARLRQ…QEELERLHSG (81 aa)) are a coiled coil. The RING-type; degenerate zinc finger occupies 766–801 (SVKCLKCQEQNRAVLPCQHAVLCELCAEGSECPVCQ).

The protein belongs to the unkempt family.

Its subcellular location is the cytoplasm. Its function is as follows. Sequence-specific RNA-binding protein which plays an important role in the establishment and maintenance of the early morphology of cortical neurons during embryonic development. Acts as a translation repressor and controls a translationally regulated cell morphology program to ensure proper structuring of the nervous system. Translational control depends on recognition of its binding element within target mRNAs which consists of a mandatory UAG trimer upstream of a U/A-rich motif. Associated with polysomes. This is RING finger protein unkempt homolog (UNK) from Canis lupus familiaris (Dog).